A 400-amino-acid polypeptide reads, in one-letter code: Homoserine O-acetyltransferase (400 aa).

An AB hydrolase-1 domain is found at 64–374; the sequence is NAILVCHALT…DKGHDAFLLD (311 aa). The Nucleophile role is filled by S169. R239 contributes to the substrate binding site. Residues D335 and H368 contribute to the active site. D369 contacts substrate.

The protein belongs to the AB hydrolase superfamily. MetX family. As to quaternary structure, homodimer.

The protein localises to the cytoplasm. It carries out the reaction L-homoserine + acetyl-CoA = O-acetyl-L-homoserine + CoA. It functions in the pathway amino-acid biosynthesis; L-methionine biosynthesis via de novo pathway; O-acetyl-L-homoserine from L-homoserine: step 1/1. Functionally, transfers an acetyl group from acetyl-CoA to L-homoserine, forming acetyl-L-homoserine. The polypeptide is Homoserine O-acetyltransferase (Rhodopseudomonas palustris (strain ATCC BAA-98 / CGA009)).